Consider the following 887-residue polypeptide: Alanine--tRNA ligase (887 aa).

Zn(2+) contacts are provided by His-581, His-585, Cys-683, and His-687.

Belongs to the class-II aminoacyl-tRNA synthetase family. Requires Zn(2+) as cofactor.

It localises to the cytoplasm. It carries out the reaction tRNA(Ala) + L-alanine + ATP = L-alanyl-tRNA(Ala) + AMP + diphosphate. Functionally, catalyzes the attachment of alanine to tRNA(Ala) in a two-step reaction: alanine is first activated by ATP to form Ala-AMP and then transferred to the acceptor end of tRNA(Ala). Also edits incorrectly charged Ser-tRNA(Ala) and Gly-tRNA(Ala) via its editing domain. This chain is Alanine--tRNA ligase, found in Ehrlichia ruminantium (strain Gardel).